The chain runs to 58 residues: Large ribosomal subunit protein uL30 (58 aa).

This sequence belongs to the universal ribosomal protein uL30 family. As to quaternary structure, part of the 50S ribosomal subunit.

In Novosphingobium aromaticivorans (strain ATCC 700278 / DSM 12444 / CCUG 56034 / CIP 105152 / NBRC 16084 / F199), this protein is Large ribosomal subunit protein uL30.